The following is a 466-amino-acid chain: 3-isopropylmalate dehydratase large subunit (466 aa).

The [4Fe-4S] cluster site is built by C349, C410, and C413.

The protein belongs to the aconitase/IPM isomerase family. LeuC type 1 subfamily. Heterodimer of LeuC and LeuD. The cofactor is [4Fe-4S] cluster.

The catalysed reaction is (2R,3S)-3-isopropylmalate = (2S)-2-isopropylmalate. The protein operates within amino-acid biosynthesis; L-leucine biosynthesis; L-leucine from 3-methyl-2-oxobutanoate: step 2/4. Catalyzes the isomerization between 2-isopropylmalate and 3-isopropylmalate, via the formation of 2-isopropylmaleate. The protein is 3-isopropylmalate dehydratase large subunit of Vesicomyosocius okutanii subsp. Calyptogena okutanii (strain HA).